The primary structure comprises 490 residues: Betaine aldehyde dehydrogenase (490 aa).

K(+)-binding residues include Ile-27 and Asp-93. Position 150–152 (150–152) interacts with NAD(+); it reads GAW. Catalysis depends on Lys-162, which acts as the Charge relay system. An NAD(+)-binding site is contributed by 176–179; sequence KPSE. Val-180 provides a ligand contact to K(+). 230-233 contributes to the NAD(+) binding site; it reads GTDT. Leu-246 lines the K(+) pocket. Catalysis depends on Glu-252, which acts as the Proton acceptor. 3 residues coordinate NAD(+): Gly-254, Cys-286, and Glu-387. Cys-286 acts as the Nucleophile in catalysis. Cys-286 carries the post-translational modification Cysteine sulfenic acid (-SOH). Positions 457 and 460 each coordinate K(+). The active-site Charge relay system is Glu-464.

This sequence belongs to the aldehyde dehydrogenase family. In terms of assembly, dimer of dimers. It depends on K(+) as a cofactor.

The enzyme catalyses betaine aldehyde + NAD(+) + H2O = glycine betaine + NADH + 2 H(+). It participates in amine and polyamine biosynthesis; betaine biosynthesis via choline pathway; betaine from betaine aldehyde: step 1/1. Its function is as follows. Involved in the biosynthesis of the osmoprotectant glycine betaine. Catalyzes the irreversible oxidation of betaine aldehyde to the corresponding acid. This is Betaine aldehyde dehydrogenase from Pseudomonas syringae pv. syringae (strain B728a).